A 389-amino-acid polypeptide reads, in one-letter code: tRNA(Met) cytidine acetate ligase (389 aa).

ATP is bound by residues 8-21 (IAEF…HEYL), G97, N153, and R176.

This sequence belongs to the TmcAL family.

It localises to the cytoplasm. The catalysed reaction is cytidine(34) in elongator tRNA(Met) + acetate + ATP = N(4)-acetylcytidine(34) in elongator tRNA(Met) + AMP + diphosphate. Its function is as follows. Catalyzes the formation of N(4)-acetylcytidine (ac(4)C) at the wobble position of elongator tRNA(Met), using acetate and ATP as substrates. First activates an acetate ion to form acetyladenylate (Ac-AMP) and then transfers the acetyl group to tRNA to form ac(4)C34. The protein is tRNA(Met) cytidine acetate ligase of Lactococcus lactis subsp. lactis (strain IL1403) (Streptococcus lactis).